Consider the following 339-residue polypeptide: Fructose-1,6-bisphosphatase isozyme 2 (339 aa).

Positions 3 to 10 are important for interaction with ALDOA; sequence DRSPFETD. AMP contacts are provided by residues Val18 and 28–32; that span reads TGELT. Residues Asp69 and Glu98 each contribute to the Mg(2+) site. 113-114 contributes to the AMP binding site; sequence KY. Residues Asp119, Leu121, and Asp122 each coordinate Mg(2+). Position 122 (Asp122) interacts with substrate. AMP is bound at residue Arg141. A Nuclear localization signal motif is present at residues 204–208; it reads KKKGK. 213–216 provides a ligand contact to substrate; it reads NEGY. Tyr216 and Tyr219 each carry phosphotyrosine. Residues 245-249, Tyr265, and Lys275 contribute to the substrate site; that span reads YVGSM. A Mg(2+)-binding site is contributed by Glu281.

This sequence belongs to the FBPase class 1 family. Homotetramer. Interacts with ALDOA; the interaction blocks inhibition by physiological concentrations of AMP and reduces inhibition by Ca(2+). Interacts with alpha-actinin and F-actin. The cofactor is Mg(2+).

The protein localises to the cell junction. It is found in the cytoplasm. The protein resides in the nucleus. Its subcellular location is the myofibril. It localises to the sarcomere. The protein localises to the z line. It catalyses the reaction beta-D-fructose 1,6-bisphosphate + H2O = beta-D-fructose 6-phosphate + phosphate. The protein operates within carbohydrate biosynthesis; gluconeogenesis. Its activity is regulated as follows. Subject to complex allosteric regulation. The enzyme can assume an active R-state, or an inactive T-state. Intermediate conformations may exist. AMP acts as an allosteric inhibitor. Fructose 2,6-bisphosphate acts as a competitive inhibitor. Strongly inhibited by Ca(2+). Its function is as follows. Catalyzes the hydrolysis of fructose 1,6-bisphosphate to fructose 6-phosphate in the presence of divalent cations and probably participates in glycogen synthesis from carbohydrate precursors, such as lactate. This chain is Fructose-1,6-bisphosphatase isozyme 2 (Fbp2), found in Rattus norvegicus (Rat).